We begin with the raw amino-acid sequence, 452 residues long: PHO85 cyclin CLG1 (452 aa).

The protein belongs to the cyclin family. PCL1,2 subfamily. In terms of assembly, forms a cyclin-CDK complex with PHO85.

Its function is as follows. Cyclin partner of the cyclin-dependent kinase (CDK) PHO85. Has a role in cell integrity and polarized cell growth together with the other PCL1/PCL2 cyclin family members. The polypeptide is PHO85 cyclin CLG1 (CLG1) (Saccharomyces cerevisiae (strain ATCC 204508 / S288c) (Baker's yeast)).